We begin with the raw amino-acid sequence, 401 residues long: MSTMQNCPHFGVCGGCSFPQSNYSDSLKKKEELLHQLFAPLVPSDMIAPIIPCSPSLRGRNKMEFSFFQTYEGEKSLGFISSTKPKKGIPVTTCLLIHEQTMDILKLTREWWDKHPELMAYFPPKNKGSLCTLTVRTGSPQQNFMVILTTSGTPEYRVNEACIDEWKEILLSSSLNIASIYWEEKVAARGISTYYETKLLYGAPSIQQKLSLPSDGNSASFSLRPRSFFQPQITQAAKIIETAKEFINPEGSETLLDLYCGAGTIGIMLSPYVKNVIGVEIIPDAVASAQENIKANNKEDCVEVYLEDAKAFCKRNENCKAPDVIIIDPPRCGMQSKVLKYILRIGSPKIVYISCNPKTQFQECADLISGGYRIKKMQPIDQFPYSTHLENIILLEREIDL.

Cysteine 7, cysteine 13, cysteine 16, and cysteine 94 together coordinate [4Fe-4S] cluster. S-adenosyl-L-methionine-binding residues include glutamine 230, tyrosine 259, glutamate 280, and aspartate 328. Cysteine 355 serves as the catalytic Nucleophile.

Belongs to the class I-like SAM-binding methyltransferase superfamily. RNA M5U methyltransferase family.

This is an uncharacterized protein from Chlamydia pneumoniae (Chlamydophila pneumoniae).